A 413-amino-acid chain; its full sequence is RNA-binding protein 41 (413 aa).

The segment at 225 to 247 (SGSGTAEKPSLLQDKGKQAAQGK) is disordered. In terms of domain architecture, RRM spans 309–387 (KVLYLKNLSP…KILVIEFAKS (79 aa)).

Functionally, may bind RNA. The sequence is that of RNA-binding protein 41 (Rbm41) from Mus musculus (Mouse).